An 85-amino-acid polypeptide reads, in one-letter code: Large ribosomal subunit protein uL23 (85 aa).

The protein belongs to the universal ribosomal protein uL23 family. As to quaternary structure, part of the 50S ribosomal subunit. Interacts with protein L29 and weakly with protein L39e.

Functionally, binds to a specific region on the 23S rRNA. Located at the polypeptide exit tunnel on the outside of the subunit. The polypeptide is Large ribosomal subunit protein uL23 (Haloarcula marismortui (strain ATCC 43049 / DSM 3752 / JCM 8966 / VKM B-1809) (Halobacterium marismortui)).